The primary structure comprises 1921 residues: Mediator of RNA polymerase II transcription subunit 13 (1921 aa).

Glycyl lysine isopeptide (Lys-Gly) (interchain with G-Cter in ubiquitin) cross-links involve residues lysine 220 and lysine 226. Disordered regions lie at residues 400–434 (YEKN…TSRT), 702–724 (TQVE…NSST), and 1485–1528 (SPTF…GDVS). Residues 407–427 (SSGSSRNSSISSTSSASSGSG) are compositionally biased toward low complexity. Polar residues-rich tracts occupy residues 1486 to 1496 (PTFTSLGSESS) and 1515 to 1527 (EGIT…QGDV).

Belongs to the Mediator complex subunit 13 family. In terms of assembly, component of the Mediator complex. Interacts with CYCC1-2 (CDK8 homolog). In terms of tissue distribution, ubiquitous. Highest expression in the shoot apex.

It localises to the nucleus. Component of the Mediator complex, a coactivator involved in the regulated transcription of nearly all RNA polymerase II-dependent genes. Mediator functions as a bridge to convey information from gene-specific regulatory proteins to the basal RNA polymerase II transcription machinery. The Mediator complex, having a compact conformation in its free form, is recruited to promoters by direct interactions with regulatory proteins and serves for the assembly of a functional preinitiation complex with RNA polymerase II and the general transcription factors. Acts closely together with MAB12. Involved in the regulation of embryo patterning and cotyledon organogenesis. May act through transient repression of specific genes such as the ones responsive to auxin. This Arabidopsis thaliana (Mouse-ear cress) protein is Mediator of RNA polymerase II transcription subunit 13 (MED13).